We begin with the raw amino-acid sequence, 380 residues long: MQGRAIWAEGPIHSFDLPSSSLERGGQALKSGASKTHAYMDEEVGTSTAEAWTWIVPSLSFIQGFMAGQAVLLMLFLGLFRYFFMTSSPGTRAQQQADLLQRVHAVRTSMDMRSHVPPYARVPYEQGVQACVQDLLSQVRYDPSEHAPESLDWLNVLVAQLLMSYRMSILNAGMCAGRNEDMDEPALPSTANAEKTAAKLALERVLNEAMQGRATKHFLDRLVVTDIDMGCRYPTFSHARVRPALHAKSTLVEIDFEYMDALTLGIDTRMWLHFPQWRFGSLAANLCMRVERFAGTLVLEIGTLPEPTPVQARVCLHPNFVLDAHLSTILGSKSKLQDVPKIEELFLARLRSWLEHNVVWPHFWHIPLPGIGTSPADPLA.

Residues 1–64 (MQGRAIWAEG…IVPSLSFIQG (64 aa)) are Lumenal-facing. The helical transmembrane segment at 65-85 (FMAGQAVLLMLFLGLFRYFFM) threads the bilayer. The Cytoplasmic portion of the chain corresponds to 86-380 (TSSPGTRAQQ…IGTSPADPLA (295 aa)). An SMP-LTD domain is found at 147–369 (APESLDWLNV…WPHFWHIPLP (223 aa)).

The protein belongs to the MMM1 family. In terms of assembly, homodimer. Component of the ER-mitochondria encounter structure (ERMES) or MDM complex, composed of MMM1, MDM10, MDM12 and MDM34. An MMM1 homodimer associates with one molecule of MDM12 on each side in a pairwise head-to-tail manner, and the SMP-LTD domains of MMM1 and MDM12 generate a continuous hydrophobic tunnel for phospholipid trafficking.

It is found in the endoplasmic reticulum membrane. Its function is as follows. Component of the ERMES/MDM complex, which serves as a molecular tether to connect the endoplasmic reticulum (ER) and mitochondria. Components of this complex are involved in the control of mitochondrial shape and protein biogenesis, and function in nonvesicular lipid trafficking between the ER and mitochondria. The MDM12-MMM1 subcomplex functions in the major beta-barrel assembly pathway that is responsible for biogenesis of all outer membrane beta-barrel proteins, and acts in a late step after the SAM complex. The MDM10-MDM12-MMM1 subcomplex further acts in the TOM40-specific pathway after the action of the MDM12-MMM1 complex. Essential for establishing and maintaining the structure of mitochondria and maintenance of mtDNA nucleoids. This Malassezia globosa (strain ATCC MYA-4612 / CBS 7966) (Dandruff-associated fungus) protein is Maintenance of mitochondrial morphology protein 1.